The following is a 150-amino-acid chain: Actin-depolymerizing factor 3 (150 aa).

The region spanning 7–150 is the ADF-H domain; the sequence is GVAVSEECKA…TLDVLKDHTS (144 aa).

It belongs to the actin-binding proteins ADF family.

In terms of biological role, actin-depolymerizing protein. Severs actin filaments (F-actin) and binds to actin monomers. The protein is Actin-depolymerizing factor 3 (ADF3) of Oryza sativa subsp. japonica (Rice).